We begin with the raw amino-acid sequence, 557 residues long: Dihydroxy-acid dehydratase (557 aa).

Aspartate 78 lines the Mg(2+) pocket. Residue cysteine 119 coordinates [2Fe-2S] cluster. Mg(2+) contacts are provided by aspartate 120 and lysine 121. Residue lysine 121 is modified to N6-carboxylysine. Cysteine 192 is a binding site for [2Fe-2S] cluster. Glutamate 442 lines the Mg(2+) pocket. The active-site Proton acceptor is the serine 468.

Belongs to the IlvD/Edd family. In terms of assembly, homodimer. It depends on [2Fe-2S] cluster as a cofactor. Mg(2+) is required as a cofactor.

It catalyses the reaction (2R)-2,3-dihydroxy-3-methylbutanoate = 3-methyl-2-oxobutanoate + H2O. The enzyme catalyses (2R,3R)-2,3-dihydroxy-3-methylpentanoate = (S)-3-methyl-2-oxopentanoate + H2O. It participates in amino-acid biosynthesis; L-isoleucine biosynthesis; L-isoleucine from 2-oxobutanoate: step 3/4. Its pathway is amino-acid biosynthesis; L-valine biosynthesis; L-valine from pyruvate: step 3/4. Its function is as follows. Functions in the biosynthesis of branched-chain amino acids. Catalyzes the dehydration of (2R,3R)-2,3-dihydroxy-3-methylpentanoate (2,3-dihydroxy-3-methylvalerate) into 2-oxo-3-methylpentanoate (2-oxo-3-methylvalerate) and of (2R)-2,3-dihydroxy-3-methylbutanoate (2,3-dihydroxyisovalerate) into 2-oxo-3-methylbutanoate (2-oxoisovalerate), the penultimate precursor to L-isoleucine and L-valine, respectively. This Bacillus thuringiensis subsp. konkukian (strain 97-27) protein is Dihydroxy-acid dehydratase.